A 978-amino-acid chain; its full sequence is Regulator of telomere elongation helicase 1 homolog (978 aa).

The Helicase ATP-binding domain maps to 7–318; that stretch reads NGIPVNFPFE…EDDDAKKDFT (312 aa). 42–49 is an ATP binding site; sequence SPTGTGKT. C159, C177, C186, and C222 together coordinate [4Fe-4S] cluster. The short motif at 265–268 is the DEAH box element; sequence DEAH.

The protein belongs to the helicase family. RAD3/XPD subfamily.

It localises to the nucleus. The catalysed reaction is ATP + H2O = ADP + phosphate + H(+). Functionally, a probable ATP-dependent DNA helicase implicated in DNA repair and the maintenance of genomic stability. Acts as an anti-recombinase to counteract toxic recombination and limit crossover during meiosis. Regulates meiotic recombination and crossover homeostasis by physically dissociating strand invasion events and thereby promotes noncrossover repair by meiotic synthesis dependent strand annealing (SDSA) as well as disassembly of D loop recombination intermediates. The polypeptide is Regulator of telomere elongation helicase 1 homolog (Culex quinquefasciatus (Southern house mosquito)).